A 51-amino-acid chain; its full sequence is Sperm protamine P1 (51 aa).

Positions 1-13 (MARYRCCRSQSRS) are enriched in low complexity. The interval 1–30 (MARYRCCRSQSRSRYYRQRQRSRRRRRRSC) is disordered. A compositionally biased stretch (basic residues) spans 14-30 (RYYRQRQRSRRRRRRSC). The cysteines at positions 40 and 48 are disulfide-linked.

Belongs to the protamine P1 family. In terms of assembly, cross-linked by interchain disulfide bonds around the DNA-helix. Post-translationally, phosphorylated by SRPK1. As to expression, testis.

It is found in the nucleus. The protein localises to the chromosome. Its function is as follows. Protamines substitute for histones in the chromatin of sperm during the haploid phase of spermatogenesis. They compact sperm DNA into a highly condensed, stable and inactive complex. The polypeptide is Sperm protamine P1 (PRM1) (Homo sapiens (Human)).